The primary structure comprises 1375 residues: DNA-directed RNA polymerase subunit beta (1375 aa).

It belongs to the RNA polymerase beta chain family. As to quaternary structure, the RNAP catalytic core consists of 2 alpha, 1 beta, 1 beta' and 1 omega subunit. When a sigma factor is associated with the core the holoenzyme is formed, which can initiate transcription.

The enzyme catalyses RNA(n) + a ribonucleoside 5'-triphosphate = RNA(n+1) + diphosphate. DNA-dependent RNA polymerase catalyzes the transcription of DNA into RNA using the four ribonucleoside triphosphates as substrates. This Coxiella burnetii (strain Dugway 5J108-111) protein is DNA-directed RNA polymerase subunit beta.